A 263-amino-acid polypeptide reads, in one-letter code: Follistatin-related protein 3 (263 aa).

The N-terminal stretch at 1–26 (MRPGAPGPLWPLPWGALAWAVGFVSS) is a signal peptide. The 72-residue stretch at 36-107 (GVCWLQQGQE…SCDGVECGPG (72 aa)) folds into the TB domain. 13 disulfides stabilise this stretch: cysteine 38-cysteine 61, cysteine 48-cysteine 92, cysteine 62-cysteine 95, cysteine 99-cysteine 110, cysteine 104-cysteine 119, cysteine 121-cysteine 153, cysteine 125-cysteine 146, cysteine 135-cysteine 167, cysteine 171-cysteine 182, cysteine 176-cysteine 192, cysteine 195-cysteine 229, cysteine 200-cysteine 222, and cysteine 211-cysteine 243. N-linked (GlcNAc...) asparagine glycosylation occurs at asparagine 73. The Follistatin-like 1 domain maps to 99–119 (CDGVECGPGKACRMLGGRPRC). One can recognise a Kazal-like 1 domain in the interval 113 to 169 (LGGRPRCECAPDCSGLPARLQVCGSDGATYRDECELRAARCRGHPDLSVMYRGRCRK). The Follistatin-like 2 domain occupies 170–193 (SCEHVVCPRPQSCVVDQTGSAHCV). One can recognise a Kazal-like 2 domain in the interval 189–245 (SAHCVVCRAAPCPVPSSPGQELCGNNNVTYISSCHMRQATCFLGRSIGVRHAGSCAG). The N-linked (GlcNAc...) asparagine glycan is linked to asparagine 215. The segment at 242-263 (SCAGTPEEPPGGESAEEEENFV) is disordered. Serine 255 carries the post-translational modification Phosphoserine; by FAM20C.

Interacts with INHBA and INHBB. Interacts with FN1. Interacts with ADAM12. Isoform 2 interacts with MLLT10; the interaction enhances MLLT10 in vitro transcriptional activity and self-association. Interacts with MSTN. Expressed in a wide range of tissues.

Its subcellular location is the secreted. It localises to the nucleus. Its function is as follows. Isoform 1 or the secreted form is a binding and antagonizing protein for members of the TGF-beta family, such as activin, BMP2 and MSTN. Inhibits activin A-, activin B-, BMP2- and MSDT-induced cellular signaling; more effective on activin A than on activin B. Involved in bone formation; inhibits osteoclast differentiation. Involved in hematopoiesis; involved in differentiation of hemopoietic progenitor cells, increases hematopoietic cell adhesion to fibronectin and seems to contribute to the adhesion of hematopoietic precursor cells to the bone marrow stroma. Isoform 2 or the nuclear form is probably involved in transcriptional regulation via interaction with MLLT10. This chain is Follistatin-related protein 3 (FSTL3), found in Homo sapiens (Human).